The chain runs to 212 residues: Cyclin-dependent kinase inhibitor 3 (212 aa).

The segment covering 1–12 (MKPPSSIQTSEF) has biased composition (polar residues). The disordered stretch occupies residues 1–23 (MKPPSSIQTSEFDSSDEEPIEDE). Residues 1–34 (MKPPSSIQTSEFDSSDEEPIEDEQTPIQISWLPL) form an interaction with CDK2 region. Over residues 13 to 23 (DSSDEEPIEDE) the composition is skewed to acidic residues. The region spanning 32–201 (LPLSRVNYSQ…FRDKLAAHLS (170 aa)) is the Tyrosine-protein phosphatase domain. Cysteine 140 (phosphocysteine intermediate) is an active-site residue.

It belongs to the protein-tyrosine phosphatase family. In terms of assembly, interacts with cyclin-dependent kinases such as CDK1, CDK2 and CDK3. Does not interact with CDK4. Interacts (via C-terminus) with phosphorylated CDK2 (via C-terminal helix). Interacts with MS4A3 (via C-terminus); the interaction enhances CDKN3 enzymatic activity.

Its subcellular location is the cytoplasm. The protein resides in the perinuclear region. It catalyses the reaction O-phospho-L-tyrosyl-[protein] + H2O = L-tyrosyl-[protein] + phosphate. It carries out the reaction O-phospho-L-seryl-[protein] + H2O = L-seryl-[protein] + phosphate. The enzyme catalyses O-phospho-L-threonyl-[protein] + H2O = L-threonyl-[protein] + phosphate. Functionally, may play a role in cell cycle regulation. Dual specificity phosphatase active toward substrates containing either phosphotyrosine or phosphoserine residues. Dephosphorylates CDK2 at 'Thr-160' in a cyclin-dependent manner. The chain is Cyclin-dependent kinase inhibitor 3 from Sus scrofa (Pig).